Reading from the N-terminus, the 427-residue chain is MDFVVNKIEAISGSVKVPGDKSISHRSIILGSISKGTTYVRDILLSEDVQRTIGFFKKLGVSIEQKNKVIALKGMAIEDFRPYTQELDMGNSGTSARLLLGLISGSPHAYVLNGDPFLKKRPMKRVTKPLEQMGAHIEYLEREDLLPIKIKGGNLRGIHYKLPVASAQIKSALILAGLHCSGKTVIEEPVATRDHTEIMIQHFGGTVEKNNHFIQIKGNQRLLANEVLVPGDISSAAFLLVLSAIVPKAELMIEDVGLNPTRSGILHVLESMGARMEILEERVVNGERVGNILIRHSCLKAVTIEGDIIPTLIDEIPILAVAATQAEGITVIRDAQELKVKESNRIDTVVSQLKKMGANIEASHDGMIIQGPTKLKGATIDSEFDHRIAMAFAVAGMVAEGETKILKSECIAVSFPEFTEILKKISK.

3-phosphoshikimate-binding residues include Lys21, Ser22, and Arg26. A phosphoenolpyruvate-binding site is contributed by Lys21. Phosphoenolpyruvate contacts are provided by Gly93 and Arg121. Ser166, Gln168, Asp314, and Lys341 together coordinate 3-phosphoshikimate. Gln168 lines the phosphoenolpyruvate pocket. Asp314 (proton acceptor) is an active-site residue. Residues Arg345 and Arg387 each coordinate phosphoenolpyruvate.

Belongs to the EPSP synthase family. As to quaternary structure, monomer.

It is found in the cytoplasm. It carries out the reaction 3-phosphoshikimate + phosphoenolpyruvate = 5-O-(1-carboxyvinyl)-3-phosphoshikimate + phosphate. It functions in the pathway metabolic intermediate biosynthesis; chorismate biosynthesis; chorismate from D-erythrose 4-phosphate and phosphoenolpyruvate: step 6/7. In terms of biological role, catalyzes the transfer of the enolpyruvyl moiety of phosphoenolpyruvate (PEP) to the 5-hydroxyl of shikimate-3-phosphate (S3P) to produce enolpyruvyl shikimate-3-phosphate and inorganic phosphate. This chain is 3-phosphoshikimate 1-carboxyvinyltransferase, found in Alkaliphilus oremlandii (strain OhILAs) (Clostridium oremlandii (strain OhILAs)).